A 164-amino-acid polypeptide reads, in one-letter code: MAKTSNKVKRNANKANIFKLLADNRYAKFQYEISETIEAGIELLGTEVKSIRNGKANLRDGYCSFRDNEILLLNVHISPHKNVGSFFNHDPLRNRKLLLHKKEIIKMKSSTEKKGMTIVPLNLYLKGSWIKLTIGVGKGKKLHDKRQDEKQKSIKREINSALKR.

A disordered region spans residues 141 to 164 (KLHDKRQDEKQKSIKREINSALKR). Positions 145-158 (KRQDEKQKSIKREI) are enriched in basic and acidic residues.

The protein belongs to the SmpB family.

It localises to the cytoplasm. In terms of biological role, required for rescue of stalled ribosomes mediated by trans-translation. Binds to transfer-messenger RNA (tmRNA), required for stable association of tmRNA with ribosomes. tmRNA and SmpB together mimic tRNA shape, replacing the anticodon stem-loop with SmpB. tmRNA is encoded by the ssrA gene; the 2 termini fold to resemble tRNA(Ala) and it encodes a 'tag peptide', a short internal open reading frame. During trans-translation Ala-aminoacylated tmRNA acts like a tRNA, entering the A-site of stalled ribosomes, displacing the stalled mRNA. The ribosome then switches to translate the ORF on the tmRNA; the nascent peptide is terminated with the 'tag peptide' encoded by the tmRNA and targeted for degradation. The ribosome is freed to recommence translation, which seems to be the essential function of trans-translation. The chain is SsrA-binding protein from Prochlorococcus marinus (strain MIT 9215).